The sequence spans 82 residues: DNA-directed RNA polymerase subunit omega (82 aa).

Belongs to the RNA polymerase subunit omega family. As to quaternary structure, the RNAP catalytic core consists of 2 alpha, 1 beta, 1 beta' and 1 omega subunit. When a sigma factor is associated with the core the holoenzyme is formed, which can initiate transcription.

The enzyme catalyses RNA(n) + a ribonucleoside 5'-triphosphate = RNA(n+1) + diphosphate. In terms of biological role, promotes RNA polymerase assembly. Latches the N- and C-terminal regions of the beta' subunit thereby facilitating its interaction with the beta and alpha subunits. The sequence is that of DNA-directed RNA polymerase subunit omega from Lacticaseibacillus casei (strain BL23) (Lactobacillus casei).